The sequence spans 674 residues: MNRINILNADTANKIAAGEVVERPSSVVKELVENSLDAGAKNITIEIQNGGESLIKIIDDGSGVHPEDVEKAFNPHATSKIKDTYDIFSINTLGFRGEALPSIASIARVDFKSKTEDFDMGKELIISGGEKESLTDCSMNRGTQIEVRDLFFNVPARKKFLKTTARESALINDLVNRISLANPDVSFKLFNNNKKILNTYGNGKLIDVIRTIYGKSTAENLIYFEEHKDTASVYGFIGNDTLARASRNNQSLFVNKRYVKNRSLTVAVENAFRSFNVTGKFPFFVLFIDTYPELIDVNIHPTKSEIKFKDERFIFKVVFDAVHSAMREYVKDTFTLPEEEEKKFEALKEEVIQESLDKEISTLEKLKENINYKVSEDKKKEEIYSYNPSKDYEAKTEVNIPVDFLSKENQDESFSINNSLENNEFKEVSAKREISYDPILIKNELKDKVSESTSESLERSDYKCNKNEYGNSIEEIIYREAKFPKLRVIGQFNKTYILAEYDSTLYLIDQHAAHEKILFEKYSSDIAKKKVEIQPLMIPLVVTLPTEDYLYYDENKEIFEKAGFKISDFGDNSIRIEEVPYFLDKLNPTELITSMINNLKKMGTGETVEVKYNKIASMSCRAAVKANDVLSILEMENLIEDLRYINDPFHCPHGRPTIIKFTSYELDKKFKRIT.

It belongs to the DNA mismatch repair MutL/HexB family.

Its function is as follows. This protein is involved in the repair of mismatches in DNA. It is required for dam-dependent methyl-directed DNA mismatch repair. May act as a 'molecular matchmaker', a protein that promotes the formation of a stable complex between two or more DNA-binding proteins in an ATP-dependent manner without itself being part of a final effector complex. The protein is DNA mismatch repair protein MutL of Clostridium perfringens (strain 13 / Type A).